The sequence spans 105 residues: Phosphoribosyl-ATP pyrophosphatase (105 aa).

This sequence belongs to the PRA-PH family.

Its subcellular location is the cytoplasm. The enzyme catalyses 1-(5-phospho-beta-D-ribosyl)-ATP + H2O = 1-(5-phospho-beta-D-ribosyl)-5'-AMP + diphosphate + H(+). Its pathway is amino-acid biosynthesis; L-histidine biosynthesis; L-histidine from 5-phospho-alpha-D-ribose 1-diphosphate: step 2/9. The chain is Phosphoribosyl-ATP pyrophosphatase from Ruthia magnifica subsp. Calyptogena magnifica.